The chain runs to 343 residues: Zinc finger protein Gfi-1b (343 aa).

The tract at residues 1–20 (MPRSFLVKSKKTHTYNQHRY) is mediates repression of transcription. The interval 1–20 (MPRSFLVKSKKTHTYNQHRY) is SNAG domain. The segment at 51–77 (STDPTEKQHTPENVITEEARSDPGDPR) is disordered. Residues 67 to 77 (EEARSDPGDPR) show a composition bias toward basic and acidic residues. 6 consecutive C2H2-type zinc fingers follow at residues 176 to 199 (YHCV…RRSH), 205 to 227 (FVCN…LNVH), 233 to 255 (FECK…LLIH), 261 to 283 (YPCQ…TYIH), 289 to 311 (HKCQ…SRKH), and 317 to 340 (FSCD…ENQH).

The protein localises to the nucleus. In terms of biological role, essential transcriptional regulator necessary for development and differentiation of erythroid and megakaryocytic lineages. Alters histone methylation by recruiting histone methyltransferase to target genes promoters. Plays a role in heterochromatin formation. In Xenopus laevis (African clawed frog), this protein is Zinc finger protein Gfi-1b (gfi1b).